Reading from the N-terminus, the 477-residue chain is Phosphomethylpyrimidine synthase (477 aa).

Substrate is bound by residues asparagine 67, methionine 96, tyrosine 125, histidine 160, 180–182 (SRG), 221–224 (DGLR), and glutamate 260. Histidine 264 contributes to the Zn(2+) binding site. Tyrosine 287 provides a ligand contact to substrate. Residue histidine 328 coordinates Zn(2+). Residues cysteine 408, cysteine 411, and cysteine 416 each contribute to the [4Fe-4S] cluster site. Residues 427 to 440 (AGDGMDGLESRTDL) are compositionally biased toward basic and acidic residues. The interval 427-477 (AGDGMDGLESRTDLDSSAAAAVNRPPTGVHRAEKLDDIPCPVAEDDVAADD) is disordered.

Belongs to the ThiC family. It depends on [4Fe-4S] cluster as a cofactor.

The catalysed reaction is 5-amino-1-(5-phospho-beta-D-ribosyl)imidazole + S-adenosyl-L-methionine = 4-amino-2-methyl-5-(phosphooxymethyl)pyrimidine + CO + 5'-deoxyadenosine + formate + L-methionine + 3 H(+). Its pathway is cofactor biosynthesis; thiamine diphosphate biosynthesis. Catalyzes the synthesis of the hydroxymethylpyrimidine phosphate (HMP-P) moiety of thiamine from aminoimidazole ribotide (AIR) in a radical S-adenosyl-L-methionine (SAM)-dependent reaction. In Natronomonas pharaonis (strain ATCC 35678 / DSM 2160 / CIP 103997 / JCM 8858 / NBRC 14720 / NCIMB 2260 / Gabara) (Halobacterium pharaonis), this protein is Phosphomethylpyrimidine synthase.